The primary structure comprises 127 residues: Large ribosomal subunit protein bL12 (127 aa).

This sequence belongs to the bacterial ribosomal protein bL12 family. Homodimer. Part of the ribosomal stalk of the 50S ribosomal subunit. Forms a multimeric L10(L12)X complex, where L10 forms an elongated spine to which 2 to 4 L12 dimers bind in a sequential fashion. Binds GTP-bound translation factors.

Forms part of the ribosomal stalk which helps the ribosome interact with GTP-bound translation factors. Is thus essential for accurate translation. In Streptomyces griseus subsp. griseus (strain JCM 4626 / CBS 651.72 / NBRC 13350 / KCC S-0626 / ISP 5235), this protein is Large ribosomal subunit protein bL12.